Reading from the N-terminus, the 1353-residue chain is DNA-directed RNA polymerase subunit beta' (1353 aa).

Residues 1-117 are unknown; it reads MSDNRLFTSV…AFQKLNDLFK (117 aa). The segment at 118 to 1353 is DNA-directed RNA polymerase subunit beta'; that stretch reads LYNHFPSISS…SELTKKTNQN (1236 aa). Cysteine 189, cysteine 191, cysteine 203, and cysteine 206 together coordinate Zn(2+). Residues aspartate 578, aspartate 580, and aspartate 582 each coordinate Mg(2+).

This sequence belongs to the RNA polymerase beta' chain family. As to quaternary structure, the RNAP catalytic core consists of 2 alpha, 1 beta, 1 beta' and 1 omega subunit. When a sigma factor is associated with the core the holoenzyme is formed, which can initiate transcription. Requires Mg(2+) as cofactor. Zn(2+) serves as cofactor.

The enzyme catalyses RNA(n) + a ribonucleoside 5'-triphosphate = RNA(n+1) + diphosphate. Functionally, DNA-dependent RNA polymerase catalyzes the transcription of DNA into RNA using the four ribonucleoside triphosphates as substrates. This is DNA-directed RNA polymerase subunit beta' from Aster yellows witches'-broom phytoplasma (strain AYWB).